We begin with the raw amino-acid sequence, 354 residues long: Protein-glutamate methylesterase/protein-glutamine glutaminase of group 3 operon (354 aa).

The Response regulatory domain occupies 3–121 (RILLATSTVE…MQLEQPAIEK (119 aa)). A CheB-type methylesterase domain is found at 158 to 340 (PIGIVGIAAS…LESIAENITA (183 aa)). Active-site residues include S167, H194, and D287.

This sequence belongs to the CheB family.

Its subcellular location is the cytoplasm. It catalyses the reaction [protein]-L-glutamate 5-O-methyl ester + H2O = L-glutamyl-[protein] + methanol + H(+). The catalysed reaction is L-glutaminyl-[protein] + H2O = L-glutamyl-[protein] + NH4(+). Its function is as follows. Involved in chemotaxis. Part of a chemotaxis signal transduction system that modulates chemotaxis in response to various stimuli. Catalyzes the demethylation of specific methylglutamate residues introduced into the chemoreceptors (methyl-accepting chemotaxis proteins or MCP) by CheR. Also mediates the irreversible deamidation of specific glutamine residues to glutamic acid. This chain is Protein-glutamate methylesterase/protein-glutamine glutaminase of group 3 operon, found in Rhizobium meliloti (strain 1021) (Ensifer meliloti).